Reading from the N-terminus, the 206-residue chain is Small ribosomal subunit protein uS4A (206 aa).

The 61-residue stretch at 96–156 folds into the S4 RNA-binding domain; that stretch reads GRLDNVVYRM…EKAKKQSRIG (61 aa).

The protein belongs to the universal ribosomal protein uS4 family. Part of the 30S ribosomal subunit. Contacts protein S5. The interaction surface between S4 and S5 is involved in control of translational fidelity.

Its function is as follows. One of the primary rRNA binding proteins, it binds directly to 16S rRNA where it nucleates assembly of the body of the 30S subunit. In terms of biological role, with S5 and S12 plays an important role in translational accuracy. The chain is Small ribosomal subunit protein uS4A from Psychromonas ingrahamii (strain DSM 17664 / CCUG 51855 / 37).